A 301-amino-acid polypeptide reads, in one-letter code: Probable alpha-L-glutamate ligase (301 aa).

An ATP-grasp domain is found at 104 to 287 (LQLLSRRGIG…VAGIIIEHLE (184 aa)). Residues lysine 141, 178–179 (EY), aspartate 187, and 211–213 (RSN) each bind ATP. 3 residues coordinate Mg(2+): aspartate 248, glutamate 260, and asparagine 262. The Mn(2+) site is built by aspartate 248, glutamate 260, and asparagine 262.

It belongs to the RimK family. Mg(2+) is required as a cofactor. It depends on Mn(2+) as a cofactor.

The sequence is that of Probable alpha-L-glutamate ligase from Pseudomonas fluorescens (strain Pf0-1).